Consider the following 101-residue polypeptide: Integration host factor subunit beta (101 aa).

Belongs to the bacterial histone-like protein family. In terms of assembly, heterodimer of an alpha and a beta chain.

In terms of biological role, this protein is one of the two subunits of integration host factor, a specific DNA-binding protein that functions in genetic recombination as well as in transcriptional and translational control. The sequence is that of Integration host factor subunit beta from Maricaulis maris (strain MCS10) (Caulobacter maris).